We begin with the raw amino-acid sequence, 65 residues long: MPKMKTNRASAKRFKKTASGGFKAGQAFTSHRFHGKTKKQRRQLRGTAMMNKVNVKRYAKILSNL.

The segment at Met1 to Gln26 is disordered.

This sequence belongs to the bacterial ribosomal protein bL35 family.

The protein is Large ribosomal subunit protein bL35 of Oenococcus oeni (strain ATCC BAA-331 / PSU-1).